The chain runs to 106 residues: Nucleoid-associated protein XCV1128 (106 aa).

The interval 81-106 (IDAESKDRMGSATAGMQLPPGMKLPF) is disordered.

Belongs to the YbaB/EbfC family. As to quaternary structure, homodimer.

Its subcellular location is the cytoplasm. It is found in the nucleoid. In terms of biological role, binds to DNA and alters its conformation. May be involved in regulation of gene expression, nucleoid organization and DNA protection. The chain is Nucleoid-associated protein XCV1128 from Xanthomonas euvesicatoria pv. vesicatoria (strain 85-10) (Xanthomonas campestris pv. vesicatoria).